The chain runs to 217 residues: Probable transaldolase (217 aa).

K83 (schiff-base intermediate with substrate) is an active-site residue.

Belongs to the transaldolase family. Type 3B subfamily.

It is found in the cytoplasm. The enzyme catalyses D-sedoheptulose 7-phosphate + D-glyceraldehyde 3-phosphate = D-erythrose 4-phosphate + beta-D-fructose 6-phosphate. It functions in the pathway carbohydrate degradation; pentose phosphate pathway; D-glyceraldehyde 3-phosphate and beta-D-fructose 6-phosphate from D-ribose 5-phosphate and D-xylulose 5-phosphate (non-oxidative stage): step 2/3. In terms of biological role, transaldolase is important for the balance of metabolites in the pentose-phosphate pathway. This is Probable transaldolase (tal) from Aquifex aeolicus (strain VF5).